The primary structure comprises 161 residues: MRTWFPYPLLSIALLLMWLLLSQSVTPGSIVLGLVVSTVLAWVTLNLQPARSRLHRWSRIAGFILRVVGDVIRSNIAVTLIILRAGRRPVNAGFMTVSLDLDDENALALLACVVTATPGTAWLEYDRRQKILLFHVLDIENEDLWRKTITRYAADLKEIFE.

A run of 2 helical transmembrane segments spans residues 4–21 (WFPYPLLSIALLLMWLLL) and 28–50 (GSIVLGLVVSTVLAWVTLNLQPA).

Belongs to the CPA3 antiporters (TC 2.A.63) subunit E family. May form a hetero-oligomeric complex that consists of six subunits: PhaAB, PhaC, PhaD, PhaE, PhaF and PhaG.

It is found in the cell membrane. Its function is as follows. Part of a K(+) efflux system which is required for the adaptation of R.meliloti to alkaline pH as well as for the infection process during symbiotic nodule development. In Rhizobium meliloti (strain 1021) (Ensifer meliloti), this protein is Probable K(+)/H(+) antiporter subunit E (phaE).